Here is a 116-residue protein sequence, read N- to C-terminus: Protein Rev (116 aa).

The residue at position 8 (serine 8) is a Phosphoserine; by host CK2. Residues 18 to 26 form a homomultimerization region; that stretch reads IIKILYQSN. 2 disordered regions span residues 25–49 and 82–116; these read SNPYPKPEGTRQARRNRRRRWRARQ and SLNCDEDSGQGTEGELGSPQIPVEPDTVLGSGDKE. Residues 34-50 carry the Nuclear localization signal and RNA-binding (RRE) motif; the sequence is TRQARRNRRRRWRARQR. Residues 36–49 are compositionally biased toward basic residues; the sequence is QARRNRRRRWRARQ. The short motif at 73-84 is the Nuclear export signal and binding to XPO1 element; it reads LQLPPLERLSLN. Phosphoserine; by host is present on serine 99.

It belongs to the HIV-1 REV protein family. As to quaternary structure, homomultimer; when bound to the RRE. Multimeric assembly is essential for activity and may involve XPO1. Binds to human KPNB1, XPO1, TNPO1, RANBP5 and IPO7. Interacts with the viral Integrase. Interacts with human KHDRBS1. Interacts with human NAP1; this interaction decreases Rev multimerization and stimulates its activity. Interacts with human DEAD-box helicases DDX3 and DDX24; these interactions may serve for viral RNA export to the cytoplasm and packaging, respectively. Interacts with human PSIP1; this interaction may inhibit HIV-1 DNA integration by promoting dissociation of the Integrase-LEDGF/p75 complex. Post-translationally, asymmetrically arginine dimethylated at one site by host PRMT6. Methylation impairs the RNA-binding activity and export of viral RNA from the nucleus to the cytoplasm. In terms of processing, phosphorylated by protein kinase CK2. Presence of, and maybe binding to the N-terminus of the regulatory beta subunit of CK2 is necessary for CK2-mediated Rev's phosphorylation.

It is found in the host nucleus. It localises to the host nucleolus. The protein localises to the host cytoplasm. Its function is as follows. Escorts unspliced or incompletely spliced viral pre-mRNAs (late transcripts) out of the nucleus of infected cells. These pre-mRNAs carry a recognition sequence called Rev responsive element (RRE) located in the env gene, that is not present in fully spliced viral mRNAs (early transcripts). This function is essential since most viral proteins are translated from unspliced or partially spliced pre-mRNAs which cannot exit the nucleus by the pathway used by fully processed cellular mRNAs. Rev itself is translated from a fully spliced mRNA that readily exits the nucleus. Rev's nuclear localization signal (NLS) binds directly to KPNB1/Importin beta-1 without previous binding to KPNA1/Importin alpha-1. KPNB1 binds to the GDP bound form of RAN (Ran-GDP) and targets Rev to the nucleus. In the nucleus, the conversion from Ran-GDP to Ran-GTP dissociates Rev from KPNB1 and allows Rev's binding to the RRE in viral pre-mRNAs. Rev multimerization on the RRE via cooperative assembly exposes its nuclear export signal (NES) to the surface. Rev can then form a complex with XPO1/CRM1 and Ran-GTP, leading to nuclear export of the complex. Conversion from Ran-GTP to Ran-GDP mediates dissociation of the Rev/RRE/XPO1/RAN complex, so that Rev can return to the nucleus for a subsequent round of export. Beside KPNB1, also seems to interact with TNPO1/Transportin-1, RANBP5/IPO5 and IPO7/RANBP7 for nuclear import. The nucleoporin-like HRB/RIP is an essential cofactor that probably indirectly interacts with Rev to release HIV RNAs from the perinuclear region to the cytoplasm. In Human immunodeficiency virus type 1 group M subtype K (isolate 97ZR-EQTB11) (HIV-1), this protein is Protein Rev.